We begin with the raw amino-acid sequence, 388 residues long: Putrescine N-methyltransferase 1 (388 aa).

3 stretches are compositionally biased toward polar residues: residues 1–14 (MEVISTNTNGSTIF), 23–39 (GYQNGTSKHQNGHQNGT), and 46–88 (HQNG…GNEL). A disordered region spans residues 1–88 (MEVISTNTNG…TISHDNGNEL (88 aa)). A PABS domain is found at 99 to 336 (PGWFSEFSAL…GVIGYMLCST (238 aa)). S-adenosyl-L-methionine is bound by residues Gln130, Glu205, and 236–237 (DG). Residue Asp255 is the Proton acceptor of the active site. S-adenosyl-L-methionine is bound at residue Tyr324.

It belongs to the class I-like SAM-binding methyltransferase superfamily. Spermidine/spermine synthase family. In terms of tissue distribution, mainly expressed in roots.

The enzyme catalyses putrescine + S-adenosyl-L-methionine = N-methylputrescine + S-adenosyl-L-homocysteine + H(+). Its pathway is alkaloid biosynthesis; nicotine biosynthesis. Functionally, involved in the biosynthesis of pyridine alkaloid natural products, leading mainly to the production of anabasine, anatabine, nicotine and nornicotine, effective deterrents against herbivores with antiparasitic and pesticide properties (neurotoxins); nornicotine serves as the precursor in the synthesis of the carcinogen compound N'-nitrosonornicotine (NNN). Methyltransferase that mediates the conversion of putrescine to N-methylputrescine. This is Putrescine N-methyltransferase 1 from Nicotiana attenuata (Coyote tobacco).